Consider the following 292-residue polypeptide: Phosphotriesterase homology protein (292 aa).

Zn(2+) contacts are provided by His-12, His-14, and Glu-125. 148-149 (HN) contributes to the beta-D-glucose binding site. A Zn(2+)-binding site is contributed by His-158. The beta-D-glucose site is built by Gly-176, Asp-178, and Arg-181. Positions 186 and 243 each coordinate Zn(2+). Beta-D-glucose contacts are provided by Asp-280 and Arg-284.

This sequence belongs to the metallo-dependent hydrolases superfamily. Phosphotriesterase family. In terms of assembly, monomer. It depends on Zn(2+) as a cofactor.

Its activity is regulated as follows. Activity is higher in the enzyme containing Mn(2+) than that containing Zn(2+). In terms of biological role, catalyzes the hydrolysis of phosphorylated glyceryl acetates in which the presence of a phosphate group is required for the enzymatic hydrolysis. Hydrolyzes a dibutyl glycerol derivative suggesting it acts on phosphoglycerol substrates with a butyrate leaving group. Also active with aromatic acetates and propionates. No activity with various sugar phosphates, with various nitrophenylphosphate or nitrophenylphosphonate derivatives, or with phosphorylated or non-phosphorylated sugar lactones tested. Does not hydrolyze non-phosphorylated carboxyesters with long chain leaving groups. No general esterase, aminopeptidase, sulfatase, phosphatase, carbonic anhydrase, phosphodiesterase, and phosphotriesterase activities detected when tested with the following non-specific substrates: p-nitrophenyl acetate, L-alanine nitroanilide, p-nitrophenyl sulfate, bis(p-nitrophenyl) phosphate, paraoxon, and p-nitrophenyl phosphate. The polypeptide is Phosphotriesterase homology protein (Escherichia coli (strain K12)).